A 1244-amino-acid polypeptide reads, in one-letter code: Superkiller complex protein 2 (1244 aa).

The interval 218-249 is disordered; that stretch reads LDLSGGDEDEGEAAGGPRGDNASPSPSGTPLV. Residues serine 242 and serine 253 each carry the phosphoserine modification. Residues 316-472 enclose the Helicase ATP-binding domain; sequence ILHLEQHDSV…WIGRLKRRQI (157 aa). 329-336 contacts ATP; that stretch reads AHTSAGKT. The DEVH box signature appears at 420–423; sequence DEVH. The Helicase C-terminal domain maps to 582-752; sequence GLTSLDLTTS…LTYTMILNLL (171 aa).

This sequence belongs to the helicase family. SKI2 subfamily. In terms of assembly, component of the SKI complex which consists of SKIC2, SKIC3 and SKIC8. Interacts with HBS1L isoform 2.

The protein resides in the nucleus. The protein localises to the cytoplasm. The catalysed reaction is ATP + H2O = ADP + phosphate + H(+). Functionally, helicase component of the SKI complex, a multiprotein complex that assists the RNA-degrading exosome during the mRNA decay and quality-control pathways. The SKI complex catalyzes mRNA extraction from 80S ribosomal complexes in the 3'-5' direction and channels mRNA to the cytosolic exosome for degradation. SKI-mediated extraction of mRNA from stalled ribosomes allow binding of the Pelota-HBS1L complex and subsequent ribosome disassembly by ABCE1 for ribosome recycling. In the nucleus, the SKI complex associates with transcriptionally active genes in a manner dependent on PAF1 complex (PAF1C). The protein is Superkiller complex protein 2 of Mus musculus (Mouse).